The chain runs to 154 residues: Small heat shock protein C2 (154 aa).

Positions 43 to 154 constitute a sHSP domain; the sequence is STEKNLIPRT…GKTRKIEVKG (112 aa).

The protein belongs to the small heat shock protein (HSP20) family.

The protein is Small heat shock protein C2 (hspC2) of Rickettsia felis (strain ATCC VR-1525 / URRWXCal2) (Rickettsia azadi).